We begin with the raw amino-acid sequence, 306 residues long: Oxygen-dependent coproporphyrinogen-III oxidase (306 aa).

Serine 94 lines the substrate pocket. 2 residues coordinate a divalent metal cation: histidine 98 and histidine 108. Histidine 108 functions as the Proton donor in the catalytic mechanism. Residue 110-112 (NVR) participates in substrate binding. Histidine 147 and histidine 177 together coordinate a divalent metal cation. The important for dimerization stretch occupies residues 242–277 (YVEFNLVYDRGTLFGLQTGGRTESILMSMPPLVRWQ). Residue 260 to 262 (GGR) participates in substrate binding.

This sequence belongs to the aerobic coproporphyrinogen-III oxidase family. As to quaternary structure, homodimer. A divalent metal cation is required as a cofactor.

It is found in the cytoplasm. The enzyme catalyses coproporphyrinogen III + O2 + 2 H(+) = protoporphyrinogen IX + 2 CO2 + 2 H2O. Its pathway is porphyrin-containing compound metabolism; protoporphyrin-IX biosynthesis; protoporphyrinogen-IX from coproporphyrinogen-III (O2 route): step 1/1. In terms of biological role, involved in the heme biosynthesis. Catalyzes the aerobic oxidative decarboxylation of propionate groups of rings A and B of coproporphyrinogen-III to yield the vinyl groups in protoporphyrinogen-IX. The protein is Oxygen-dependent coproporphyrinogen-III oxidase of Shewanella sediminis (strain HAW-EB3).